The primary structure comprises 241 residues: UPF0173 metal-dependent hydrolase Haur_4333 (241 aa).

Belongs to the UPF0173 family.

The polypeptide is UPF0173 metal-dependent hydrolase Haur_4333 (Herpetosiphon aurantiacus (strain ATCC 23779 / DSM 785 / 114-95)).